The following is a 687-amino-acid chain: Phenylalanine aminomutase (L-beta-phenylalanine forming) (687 aa).

Tyrosine 80 serves as the catalytic Proton donor/acceptor. Positions 175–177 form a cross-link, 5-imidazolinone (Ala-Gly); it reads ASG. A 2,3-didehydroalanine (Ser) modification is found at serine 176. (E)-cinnamate contacts are provided by asparagine 231, glutamine 319, arginine 325, asparagine 355, lysine 427, glutamate 455, and asparagine 458.

This sequence belongs to the PAL/histidase family. As to quaternary structure, homodimer. Homotetramer, dimer of dimers. Post-translationally, contains an active site 4-methylidene-imidazol-5-one (MIO), which is formed autocatalytically by cyclization and dehydration of residues Ala-Ser-Gly.

It is found in the cytoplasm. It carries out the reaction L-phenylalanine = L-beta-phenylalanine. The enzyme catalyses L-phenylalanine = (E)-cinnamate + NH4(+). It functions in the pathway alkaloid biosynthesis; taxol biosynthesis. Its pathway is phenylpropanoid metabolism; trans-cinnamate biosynthesis; trans-cinnamate from L-phenylalanine: step 1/1. Functionally, phenylalanine aminomutase that catalyzes the rearrangement of L-phenylalanine to R-beta-phenylalanine. Catalyzes the first committed step in the biosynthesis of the side chain of the alkaloid taxol (paclitaxel), a widely-used compound with antitumor activity. Also has low phenylalanine ammonia-lyase activity and can catalyze the amination of trans-cinnamate. The polypeptide is Phenylalanine aminomutase (L-beta-phenylalanine forming) (pam) (Taxus chinensis (Chinese yew)).